Reading from the N-terminus, the 320-residue chain is TATA box-binding protein-like 2 (320 aa).

It belongs to the TBP family. In terms of tissue distribution, expression is restricted to the gonads, and is higher in the ovary than the testis.

It is found in the nucleus. TATA box-binding transcription factor. Members of the TBP family are differentially required to regulate transcription and development during early embryogenesis. Required for gastrulation. Regulates a large subset of genes that are ventrally expressed. Binds to a subset of promoters. This is TATA box-binding protein-like 2 from Xenopus laevis (African clawed frog).